Here is a 204-residue protein sequence, read N- to C-terminus: High frequency lysogenization protein HflD homolog (204 aa).

It belongs to the HflD family.

The protein localises to the cytoplasm. It localises to the cell inner membrane. This chain is High frequency lysogenization protein HflD homolog, found in Xylella fastidiosa (strain M23).